The sequence spans 356 residues: Isocitrate dehydrogenase [NAD] subunit 1, mitochondrial (356 aa).

Substrate-binding residues include R106, R137, and D224. A Mg(2+)-binding site is contributed by D224.

Belongs to the isocitrate and isopropylmalate dehydrogenases family. In terms of assembly, octamer of two non-identical subunits IDH1 and IDH2. Requires Mg(2+) as cofactor. The cofactor is Mn(2+).

The protein resides in the mitochondrion. The catalysed reaction is D-threo-isocitrate + NAD(+) = 2-oxoglutarate + CO2 + NADH. Performs an essential role in the oxidative function of the citric acid cycle. Also binds RNA; specifically to the 5'-untranslated leaders of mitochondrial mRNAs. This Schizosaccharomyces pombe (strain 972 / ATCC 24843) (Fission yeast) protein is Isocitrate dehydrogenase [NAD] subunit 1, mitochondrial (idh1).